Reading from the N-terminus, the 185-residue chain is MWKLGRGRVLLDEPPEEEDGLRGGPPPAAAAAAQAQVQGASFRGWKEVTSLFNKDDEQHLLERCKSPKSKGTNLRLKEELKAEKKSGFWDNLVLKQNIQSKKPDEIEGWEPPKLALEDISADPEDTVGGHPSWSGWEDDAKGSTKYTSLASSANSSRWSLRAAGRLVSIRRQSKGHLTDSPEEAE.

Disordered regions lie at residues 1-29 and 121-156; these read MWKL…PPAA and ADPE…ANSS.

The protein belongs to the TDRP family. Interacts with PRM2. In terms of tissue distribution, expressed in spermatogenic cells, especially in spermatocytes (at protein level).

It localises to the nucleus. The protein localises to the cytoplasm. Its function is as follows. Contributes to normal sperm motility, but not essential for male fertility. This is Testis development-related protein (TDRP) from Homo sapiens (Human).